A 617-amino-acid polypeptide reads, in one-letter code: V-type proton ATPase catalytic subunit A (617 aa).

Residue threonine 136 is modified to Phosphothreonine. Residue 250 to 257 (GAFGCGKT) participates in ATP binding. Position 384 is a phosphoserine; by AMPK (serine 384).

Belongs to the ATPase alpha/beta chains family. In terms of assembly, V-ATPase is a heteromultimeric enzyme made up of two complexes: the ATP-hydrolytic V1 complex and the proton translocation V0 complex. The V1 complex consists of three catalytic AB heterodimers that form a heterohexamer, three peripheral stalks each consisting of EG heterodimers, one central rotor including subunits D and F, and the regulatory subunits C and H. The proton translocation complex V0 consists of the proton transport subunit a, a ring of proteolipid subunits c9c'', rotary subunit d, subunits e and f, and the accessory subunits ATP6AP1/Ac45 and ATP6AP2/PRR. Interacts with the V0 complex V-ATPase subunit a4 ATP6V0A4. Interacts with WFS1. Interacts with alpha-crystallin B chain/CRYAB and with MTOR, forming a ternary complex. Post-translationally, phosphorylation at Ser-384 by AMPK down-regulates its enzyme activity. Expressed in brain (at protein level).

The protein resides in the cytoplasm. Its subcellular location is the cytosol. It localises to the cytoplasmic vesicle. It is found in the secretory vesicle. The protein localises to the clathrin-coated vesicle membrane. The protein resides in the lysosome. The enzyme catalyses ATP + H2O + 4 H(+)(in) = ADP + phosphate + 5 H(+)(out). Its activity is regulated as follows. ATP hydrolysis occurs at the interface between the nucleotide-binding domains of subunits A and B. ATP hydrolysis triggers a conformational change in the subunits D and F, which induces a shift of subunit d. The c-ring is subsequently rotated and results in a continuous proton translocation across the membrane. The V-ATPase is inhibited by bafilomycin A. Its function is as follows. Catalytic subunit of the V1 complex of vacuolar(H+)-ATPase (V-ATPase), a multisubunit enzyme composed of a peripheral complex (V1) that hydrolyzes ATP and a membrane integral complex (V0) that translocates protons. V-ATPase is responsible for acidifying and maintaining the pH of intracellular compartments and in some cell types, is targeted to the plasma membrane, where it is responsible for acidifying the extracellular environment. In aerobic conditions, involved in intracellular iron homeostasis, thus triggering the activity of Fe(2+) prolyl hydroxylase (PHD) enzymes, and leading to HIF1A hydroxylation and subsequent proteasomal degradation. May play a role in neurite development and synaptic connectivity. The chain is V-type proton ATPase catalytic subunit A (ATP6V1A) from Bos taurus (Bovine).